A 335-amino-acid polypeptide reads, in one-letter code: DNA-directed RNA polymerase subunit alpha (335 aa).

Positions 1-231 (MVREKVTVST…DLFIPFLHME (231 aa)) are alpha N-terminal domain (alpha-NTD). The segment at 262–335 (KKKLSLESIF…FALDLPKNLN (74 aa)) is alpha C-terminal domain (alpha-CTD).

The protein belongs to the RNA polymerase alpha chain family. As to quaternary structure, in plastids the minimal PEP RNA polymerase catalytic core is composed of four subunits: alpha, beta, beta', and beta''. When a (nuclear-encoded) sigma factor is associated with the core the holoenzyme is formed, which can initiate transcription.

Its subcellular location is the plastid. The enzyme catalyses RNA(n) + a ribonucleoside 5'-triphosphate = RNA(n+1) + diphosphate. DNA-dependent RNA polymerase catalyzes the transcription of DNA into RNA using the four ribonucleoside triphosphates as substrates. The protein is DNA-directed RNA polymerase subunit alpha of Cuscuta reflexa (Southern Asian dodder).